The following is a 690-amino-acid chain: Lipase 2 (690 aa).

The first 37 residues, 1–37 (MLRGQEERKYSIRKYSIGVVSVLAATMFVVSSHEAQA), serve as a signal peptide directing secretion. A propeptide spanning residues 38–295 (SEKTPTNAAV…ADAKKVRPLK (258 aa)) is cleaved from the precursor. A compositionally biased stretch (polar residues) spans 53 to 71 (NQPGEQGNAITSHQMQSGK). Positions 53–266 (NQPGEQGNAI…KPTDKNTDNK (214 aa)) are disordered. A compositionally biased stretch (basic and acidic residues) spans 72 to 81 (QLDDMHKENG). Polar residues-rich tracts occupy residues 93-114 (LQLSKYQSTQNSKTIRTQNDNQ), 124-171 (SKQS…QPSI), and 185-206 (PTSTTPPSNDKTAPKSTKAQDA). Basic and acidic residues-rich tracts occupy residues 225–237 (IDAKQDDTVRQSE) and 257–266 (KPTDKNTDNK). The active-site Nucleophile is the Ser-412. Residue Gly-579 coordinates Ca(2+). The active-site Charge relay system is the Asp-603. Residue Asp-644 participates in Ca(2+) binding. Residue His-645 is the Charge relay system of the active site. The Ca(2+) site is built by Asp-647, Asp-652, and Asp-655.

This sequence belongs to the AB hydrolase superfamily. Lipase family.

Its subcellular location is the secreted. It catalyses the reaction a triacylglycerol + H2O = a diacylglycerol + a fatty acid + H(+). In Staphylococcus aureus (strain MSSA476), this protein is Lipase 2 (lip2).